Reading from the N-terminus, the 488-residue chain is NADH-quinone oxidoreductase subunit N (488 aa).

Helical transmembrane passes span 15 to 35 (LALP…VDLY), 42 to 62 (GMTF…AIVA), 79 to 99 (NLAA…FAYC), 108 to 128 (LLKG…MIMA), 133 to 153 (LMTV…MVAF), 168 to 188 (FVLG…IYGA), 209 to 229 (WLLL…FGAV), 243 to 263 (PTTV…ALFV), 277 to 297 (WQPM…LAAL), 305 to 325 (MLAY…IAGT), 333 to 353 (LFYA…IILL), 376 to 396 (MALM…TVGF), 409 to 429 (VGLV…AFYY), and 456 to 476 (GLLV…DSLI).

Belongs to the complex I subunit 2 family. NDH-1 is composed of 14 different subunits. Subunits NuoA, H, J, K, L, M, N constitute the membrane sector of the complex.

It is found in the cell inner membrane. It carries out the reaction a quinone + NADH + 5 H(+)(in) = a quinol + NAD(+) + 4 H(+)(out). In terms of biological role, NDH-1 shuttles electrons from NADH, via FMN and iron-sulfur (Fe-S) centers, to quinones in the respiratory chain. The immediate electron acceptor for the enzyme in this species is believed to be ubiquinone. Couples the redox reaction to proton translocation (for every two electrons transferred, four hydrogen ions are translocated across the cytoplasmic membrane), and thus conserves the redox energy in a proton gradient. The sequence is that of NADH-quinone oxidoreductase subunit N from Alkalilimnicola ehrlichii (strain ATCC BAA-1101 / DSM 17681 / MLHE-1).